The primary structure comprises 500 residues: Lysine--tRNA ligase (500 aa).

Mg(2+) contacts are provided by Glu-409 and Glu-416.

The protein belongs to the class-II aminoacyl-tRNA synthetase family. In terms of assembly, homodimer. Mg(2+) is required as a cofactor.

It localises to the cytoplasm. It catalyses the reaction tRNA(Lys) + L-lysine + ATP = L-lysyl-tRNA(Lys) + AMP + diphosphate. The chain is Lysine--tRNA ligase from Lysinibacillus sphaericus (strain C3-41).